Here is a 455-residue protein sequence, read N- to C-terminus: Ribulose bisphosphate carboxylase large chain (455 aa).

Lys-5 carries the post-translational modification N6,N6,N6-trimethyllysine. Substrate-binding residues include Asn-114 and Thr-164. Lys-166 acts as the Proton acceptor in catalysis. A substrate-binding site is contributed by Lys-168. Positions 192, 194, and 195 each coordinate Mg(2+). Lys-192 is subject to N6-carboxylysine. The active-site Proton acceptor is His-285. The substrate site is built by Arg-286, His-318, and Ser-370.

It belongs to the RuBisCO large chain family. Type I subfamily. Heterohexadecamer of 8 large chains and 8 small chains; disulfide-linked. The disulfide link is formed within the large subunit homodimers. Requires Mg(2+) as cofactor. In terms of processing, the disulfide bond which can form in the large chain dimeric partners within the hexadecamer appears to be associated with oxidative stress and protein turnover.

It localises to the plastid. It is found in the chloroplast. It catalyses the reaction 2 (2R)-3-phosphoglycerate + 2 H(+) = D-ribulose 1,5-bisphosphate + CO2 + H2O. The catalysed reaction is D-ribulose 1,5-bisphosphate + O2 = 2-phosphoglycolate + (2R)-3-phosphoglycerate + 2 H(+). RuBisCO catalyzes two reactions: the carboxylation of D-ribulose 1,5-bisphosphate, the primary event in carbon dioxide fixation, as well as the oxidative fragmentation of the pentose substrate in the photorespiration process. Both reactions occur simultaneously and in competition at the same active site. This is Ribulose bisphosphate carboxylase large chain from Lupinus albus (White lupine).